We begin with the raw amino-acid sequence, 131 residues long: Prefoldin subunit beta (131 aa).

Disordered regions lie at residues 19-41 (LQET…RESE) and 112-131 (LQGG…AGGA). Residues 20 to 35 (QETAQQVAQQKQQAET) are compositionally biased toward low complexity. Over residues 114 to 131 (GGAGGGPMGPGGPGAGGA) the composition is skewed to gly residues.

It belongs to the prefoldin subunit beta family. As to quaternary structure, heterohexamer of two alpha and four beta subunits.

The protein localises to the cytoplasm. Molecular chaperone capable of stabilizing a range of proteins. Seems to fulfill an ATP-independent, HSP70-like function in archaeal de novo protein folding. The protein is Prefoldin subunit beta of Natronomonas pharaonis (strain ATCC 35678 / DSM 2160 / CIP 103997 / JCM 8858 / NBRC 14720 / NCIMB 2260 / Gabara) (Halobacterium pharaonis).